The chain runs to 343 residues: tRNA N6-adenosine threonylcarbamoyltransferase (343 aa).

Residues histidine 115 and histidine 119 each coordinate Fe cation. Residues 137–141 (LVSGG), aspartate 170, glycine 183, aspartate 187, and asparagine 276 each bind substrate. Aspartate 306 lines the Fe cation pocket.

It belongs to the KAE1 / TsaD family. Requires Fe(2+) as cofactor.

Its subcellular location is the cytoplasm. It catalyses the reaction L-threonylcarbamoyladenylate + adenosine(37) in tRNA = N(6)-L-threonylcarbamoyladenosine(37) in tRNA + AMP + H(+). Its function is as follows. Required for the formation of a threonylcarbamoyl group on adenosine at position 37 (t(6)A37) in tRNAs that read codons beginning with adenine. Is involved in the transfer of the threonylcarbamoyl moiety of threonylcarbamoyl-AMP (TC-AMP) to the N6 group of A37, together with TsaE and TsaB. TsaD likely plays a direct catalytic role in this reaction. The sequence is that of tRNA N6-adenosine threonylcarbamoyltransferase from Limosilactobacillus reuteri (strain DSM 20016) (Lactobacillus reuteri).